A 355-amino-acid chain; its full sequence is UDP-N-acetylglucosamine--N-acetylmuramyl-(pentapeptide) pyrophosphoryl-undecaprenol N-acetylglucosamine transferase (355 aa).

UDP-N-acetyl-alpha-D-glucosamine is bound by residues 15-17 (TGG), Asn127, Arg163, Ser191, Ile244, 263-268 (ALTVSE), and Gln288.

Belongs to the glycosyltransferase 28 family. MurG subfamily.

The protein resides in the cell inner membrane. It catalyses the reaction di-trans,octa-cis-undecaprenyl diphospho-N-acetyl-alpha-D-muramoyl-L-alanyl-D-glutamyl-meso-2,6-diaminopimeloyl-D-alanyl-D-alanine + UDP-N-acetyl-alpha-D-glucosamine = di-trans,octa-cis-undecaprenyl diphospho-[N-acetyl-alpha-D-glucosaminyl-(1-&gt;4)]-N-acetyl-alpha-D-muramoyl-L-alanyl-D-glutamyl-meso-2,6-diaminopimeloyl-D-alanyl-D-alanine + UDP + H(+). It functions in the pathway cell wall biogenesis; peptidoglycan biosynthesis. In terms of biological role, cell wall formation. Catalyzes the transfer of a GlcNAc subunit on undecaprenyl-pyrophosphoryl-MurNAc-pentapeptide (lipid intermediate I) to form undecaprenyl-pyrophosphoryl-MurNAc-(pentapeptide)GlcNAc (lipid intermediate II). In Salmonella choleraesuis (strain SC-B67), this protein is UDP-N-acetylglucosamine--N-acetylmuramyl-(pentapeptide) pyrophosphoryl-undecaprenol N-acetylglucosamine transferase.